A 389-amino-acid polypeptide reads, in one-letter code: 3-ketoacyl-CoA thiolase (389 aa).

The active-site Acyl-thioester intermediate is the C91. Catalysis depends on proton acceptor residues H343 and C373.

It belongs to the thiolase-like superfamily. Thiolase family. In terms of assembly, heterotetramer of two alpha chains (FadB) and two beta chains (FadA).

It localises to the cytoplasm. The catalysed reaction is an acyl-CoA + acetyl-CoA = a 3-oxoacyl-CoA + CoA. It functions in the pathway lipid metabolism; fatty acid beta-oxidation. Catalyzes the final step of fatty acid oxidation in which acetyl-CoA is released and the CoA ester of a fatty acid two carbons shorter is formed. This Citrobacter koseri (strain ATCC BAA-895 / CDC 4225-83 / SGSC4696) protein is 3-ketoacyl-CoA thiolase.